The primary structure comprises 198 residues: Glycerol-3-phosphate acyltransferase (198 aa).

The next 5 helical transmembrane spans lie at 6 to 26 (MLPV…GLIL), 56 to 78 (LAAA…AGYL), 83 to 101 (AAML…PVWL), 113 to 133 (IGIL…VWLA), and 154 to 174 (IVLW…LTLL).

This sequence belongs to the PlsY family. As to quaternary structure, probably interacts with PlsX.

It localises to the cell inner membrane. The catalysed reaction is an acyl phosphate + sn-glycerol 3-phosphate = a 1-acyl-sn-glycero-3-phosphate + phosphate. The protein operates within lipid metabolism; phospholipid metabolism. Its function is as follows. Catalyzes the transfer of an acyl group from acyl-phosphate (acyl-PO(4)) to glycerol-3-phosphate (G3P) to form lysophosphatidic acid (LPA). This enzyme utilizes acyl-phosphate as fatty acyl donor, but not acyl-CoA or acyl-ACP. This is Glycerol-3-phosphate acyltransferase from Bradyrhizobium sp. (strain ORS 278).